The sequence spans 363 residues: Pyruvate dehydrogenase E1 component subunit alpha, mitochondrial (363 aa).

Residues 1–2 (RN) constitute a mitochondrion transit peptide. At Lys36 the chain carries N6-acetyllysine; alternate. Lys36 is modified (N6-succinyllysine; alternate). Pyruvate-binding residues include His65, Tyr91, Arg92, Ala130, Gly138, Val140, Asp169, Gly170, Ala171, Asn198, and Tyr200. Thiamine diphosphate is bound by residues Tyr91 and Arg92. Positions 138, 140, 169, 170, 171, and 198 each coordinate thiamine diphosphate. Asp169 contacts Mg(2+). 2 residues coordinate Mg(2+): Asn198 and Tyr200. Ser205 is subject to Phosphoserine; by PDK1. Lys217 bears the N6-acetyllysine; alternate mark. Lys217 carries the N6-succinyllysine; alternate modification. Position 240 is an N6-acetyllysine (Lys240). Lys250 carries the N6-succinyllysine modification. Residue His265 coordinates thiamine diphosphate. Ser266 carries the phosphoserine; by PDK1, PDK2, PDK3 and PDK4 modification. Position 268 is a phosphoserine (Ser268). Ser273 carries the post-translational modification Phosphoserine; by PDK1, PDK2, PDK3 and PDK4. The residue at position 274 (Tyr274) is a Phosphotyrosine. N6-acetyllysine; alternate is present on Lys286. Lys286 carries the N6-succinyllysine; alternate modification. An N6-acetyllysine mark is found at Lys294 and Lys309. Lys358 carries the N6-succinyllysine modification.

In terms of assembly, heterotetramer of two PDHA1 and two PDHB subunits. The heterotetramer interacts with DLAT, and is part of the multimeric pyruvate dehydrogenase complex that contains multiple copies of pyruvate dehydrogenase (E1), dihydrolipoamide acetyltransferase (DLAT, E2) and lipoamide dehydrogenase (DLD, E3). These subunits are bound to an inner core composed of about 48 DLAT and 12 PDHX molecules. Requires thiamine diphosphate as cofactor. It depends on Mg(2+) as a cofactor. In terms of processing, phosphorylation at Ser-205, Ser-266 and Ser-273 by PDK family kinases inactivates the enzyme; for this phosphorylation at a single site is sufficient. Phosphorylation at Ser-266 interferes with access to active site, and thereby inactivates the enzyme. Dephosphorylation at all three sites, i.e. at Ser-205, Ser-266 and Ser-273, is required for reactivation. Post-translationally, acetylation alters the phosphorylation pattern. Deacetylated by SIRT3.

The protein resides in the mitochondrion matrix. The enzyme catalyses N(6)-[(R)-lipoyl]-L-lysyl-[protein] + pyruvate + H(+) = N(6)-[(R)-S(8)-acetyldihydrolipoyl]-L-lysyl-[protein] + CO2. With respect to regulation, pyruvate dehydrogenase activity is inhibited by phosphorylation of PDHA1; it is reactivated by dephosphorylation. The pyruvate dehydrogenase complex catalyzes the overall conversion of pyruvate to acetyl-CoA and CO(2), and thereby links the glycolytic pathway to the tricarboxylic cycle. The chain is Pyruvate dehydrogenase E1 component subunit alpha, mitochondrial (PDHA) from Sminthopsis macroura (Stripe-faced dunnart).